The primary structure comprises 313 residues: HPr kinase/phosphorylase (313 aa).

Residues His140 and Lys161 contribute to the active site. 155–162 (GNSGAGKS) provides a ligand contact to ATP. Ser162 contributes to the Mg(2+) binding site. Catalysis depends on Asp179, which acts as the Proton acceptor; for phosphorylation activity. Proton donor; for dephosphorylation activity. Residues 203–212 (IEVRGLGILN) form an important for the catalytic mechanism of both phosphorylation and dephosphorylation region. Mg(2+) is bound at residue Glu204. The active site involves Arg246. The interval 267–272 (PVAAGR) is important for the catalytic mechanism of dephosphorylation.

It belongs to the HPrK/P family. Homohexamer. It depends on Mg(2+) as a cofactor.

It carries out the reaction [HPr protein]-L-serine + ATP = [HPr protein]-O-phospho-L-serine + ADP + H(+). The enzyme catalyses [HPr protein]-O-phospho-L-serine + phosphate + H(+) = [HPr protein]-L-serine + diphosphate. Catalyzes the ATP- as well as the pyrophosphate-dependent phosphorylation of a specific serine residue in HPr, a phosphocarrier protein of the phosphoenolpyruvate-dependent sugar phosphotransferase system (PTS). HprK/P also catalyzes the pyrophosphate-producing, inorganic phosphate-dependent dephosphorylation (phosphorolysis) of seryl-phosphorylated HPr (P-Ser-HPr). In Azoarcus sp. (strain BH72), this protein is HPr kinase/phosphorylase.